The chain runs to 216 residues: 4-hydroxy-tetrahydrodipicolinate reductase (216 aa).

NAD(+) is bound by residues 7–12 (GYSGRM), 71–73 (GTT), and 95–98 (AYNF). The active-site Proton donor/acceptor is histidine 127. Histidine 128 lines the (S)-2,3,4,5-tetrahydrodipicolinate pocket. The active-site Proton donor is lysine 131. Residue 137-138 (GT) participates in (S)-2,3,4,5-tetrahydrodipicolinate binding.

It belongs to the DapB family.

It localises to the cytoplasm. The catalysed reaction is (S)-2,3,4,5-tetrahydrodipicolinate + NAD(+) + H2O = (2S,4S)-4-hydroxy-2,3,4,5-tetrahydrodipicolinate + NADH + H(+). The enzyme catalyses (S)-2,3,4,5-tetrahydrodipicolinate + NADP(+) + H2O = (2S,4S)-4-hydroxy-2,3,4,5-tetrahydrodipicolinate + NADPH + H(+). It participates in amino-acid biosynthesis; L-lysine biosynthesis via DAP pathway; (S)-tetrahydrodipicolinate from L-aspartate: step 4/4. Its function is as follows. Catalyzes the conversion of 4-hydroxy-tetrahydrodipicolinate (HTPA) to tetrahydrodipicolinate. The protein is 4-hydroxy-tetrahydrodipicolinate reductase of Thermotoga sp. (strain RQ2).